The chain runs to 547 residues: Chaperonin GroEL 1 (547 aa).

ATP-binding positions include 30-33 (TLGP), K51, 87-91 (DGTTT), G415, and D495.

The protein belongs to the chaperonin (HSP60) family. In terms of assembly, forms a cylinder of 14 subunits composed of two heptameric rings stacked back-to-back. Interacts with the co-chaperonin GroES.

It is found in the cytoplasm. It carries out the reaction ATP + H2O + a folded polypeptide = ADP + phosphate + an unfolded polypeptide.. Its function is as follows. Together with its co-chaperonin GroES, plays an essential role in assisting protein folding. The GroEL-GroES system forms a nano-cage that allows encapsulation of the non-native substrate proteins and provides a physical environment optimized to promote and accelerate protein folding. The chain is Chaperonin GroEL 1 from Azorhizobium caulinodans (strain ATCC 43989 / DSM 5975 / JCM 20966 / LMG 6465 / NBRC 14845 / NCIMB 13405 / ORS 571).